A 258-amino-acid polypeptide reads, in one-letter code: Tryptophan synthase alpha chain (258 aa).

Residues Glu47 and Asp58 each act as proton acceptor in the active site.

It belongs to the TrpA family. In terms of assembly, tetramer of two alpha and two beta chains.

The catalysed reaction is (1S,2R)-1-C-(indol-3-yl)glycerol 3-phosphate + L-serine = D-glyceraldehyde 3-phosphate + L-tryptophan + H2O. The protein operates within amino-acid biosynthesis; L-tryptophan biosynthesis; L-tryptophan from chorismate: step 5/5. The alpha subunit is responsible for the aldol cleavage of indoleglycerol phosphate to indole and glyceraldehyde 3-phosphate. In Bacillus cereus (strain ATCC 10987 / NRS 248), this protein is Tryptophan synthase alpha chain.